A 1255-amino-acid polypeptide reads, in one-letter code: Bifunctional autolysin (1255 aa).

Residues 1–36 (MLGVINRMAKKFNYKLPSMVALTLVGSAVTAHQVQA) form the signal peptide. 2 disordered regions span residues 110–141 (GDTR…NTNV) and 193–218 (VTTF…KYKP). An N-acetylmuramoyl-L-alanine amidase region spans residues 199–775 (SAQPRSVAAT…VAQPKTAVKA (577 aa)). 7 GW domains span residues 442-516 (TVAA…YNTA), 518-592 (SPVN…DTAK), 611-685 (TVSS…YNNA), 687-761 (SPVN…VPAA), 783-858 (TTQT…VQNL), 860-935 (KEVK…APTA), and 942-1016 (AAKD…KELI). The endo-beta-N-acetylglucosaminidase stretch occupies residues 776–1255 (YTVTKPQTTQ…GKYFDIPQYK (480 aa)).

The protein in the N-terminal section; belongs to the N-acetylmuramoyl-L-alanine amidase 2 family. In the C-terminal section; belongs to the glycosyl hydrolase 73 family. In terms of assembly, oligomer; forms a ring structure at the cell surface which is important for efficient partitioning of daughter cells after cell division. Post-translationally, undergoes proteolytic processing to generate the two extracellular lytic enzymes, probably at the septal region on the cell surface.

Its subcellular location is the secreted. The catalysed reaction is Hydrolyzes the link between N-acetylmuramoyl residues and L-amino acid residues in certain cell-wall glycopeptides.. It catalyses the reaction an N(4)-(oligosaccharide-(1-&gt;3)-[oligosaccharide-(1-&gt;6)]-beta-D-Man-(1-&gt;4)-beta-D-GlcNAc-(1-&gt;4)-alpha-D-GlcNAc)-L-asparaginyl-[protein] + H2O = an oligosaccharide-(1-&gt;3)-[oligosaccharide-(1-&gt;6)]-beta-D-Man-(1-&gt;4)-D-GlcNAc + N(4)-(N-acetyl-beta-D-glucosaminyl)-L-asparaginyl-[protein]. In terms of biological role, endohydrolysis of the di-N-acetylchitobiosyl unit in high-mannose glycopeptides and glycoproteins containing the -[(Man)5(GlcNAc)2]-Asn structure. One N-acetyl-D-glucosamine residue remains attached to the protein; the rest of the oligosaccharide is released intact. Cleaves the peptidoglycan connecting the daughter cells at the end of the cell division cycle, resulting in the separation of the two newly divided cells. Acts as an autolysin in penicillin-induced lysis. The polypeptide is Bifunctional autolysin (atl) (Staphylococcus aureus (strain Mu3 / ATCC 700698)).